Consider the following 2042-residue polypeptide: Cell adhesion molecule DSCAML1 (2042 aa).

The N-terminal stretch at 1-17 is a signal peptide; it reads MWLVTFFLLYSLRKAHT. At 18–1592 the chain is on the extracellular side; sequence EDVGTSLYFV…AQGEGDDVKK (1575 aa). N-linked (GlcNAc...) asparagine glycans are attached at residues asparagine 28 and asparagine 78. Ig-like C2-type domains lie at 37–107, 114–216, 227–311, 315–403, 409–502, 507–587, 597–686, 691–785, and 789–886; these read SSTV…AENS, PNIR…ARLS, PTML…GTLT, PLRV…SIIT, PRIV…ARIN, PSIR…LSIS, PPLI…RQLI, PRFV…MFLT, and PAMI…LTVQ. 5 cysteine pairs are disulfide-bonded: cysteine 46–cysteine 102, cysteine 145–cysteine 197, cysteine 248–cysteine 295, cysteine 337–cysteine 387, and cysteine 430–cysteine 486. 9 N-linked (GlcNAc...) asparagine glycosylation sites follow: asparagine 369, asparagine 472, asparagine 514, asparagine 557, asparagine 667, asparagine 711, asparagine 750, asparagine 797, and asparagine 810. 2 disulfide bridges follow: cysteine 527–cysteine 576 and cysteine 618–cysteine 670. A disulfide bond links cysteine 712 and cysteine 768. An intrachain disulfide couples cysteine 811 to cysteine 868. Fibronectin type-III domains follow at residues 888-985, 990-1089, 1094-1190, and 1194-1289; these read PPDP…TEEA, PPMD…TLED, PPEN…TKED, and PPAG…AGKA. N-linked (GlcNAc...) asparagine glycans are attached at residues asparagine 927, asparagine 1083, asparagine 1145, asparagine 1163, asparagine 1276, and asparagine 1346. The Ig-like C2-type 10 domain maps to 1279 to 1368; that stretch reads EKVTIEPAGK…SGYYTCTATN (90 aa). Cysteine 1312 and cysteine 1364 are joined by a disulfide. Fibronectin type-III domains lie at 1384-1478 and 1479-1579; these read PPDQ…THGR and EPSF…TIPP. N-linked (GlcNAc...) asparagine glycosylation is found at asparagine 1493, asparagine 1532, and asparagine 1562. Residues 1593-1613 traverse the membrane as a helical segment; sequence LFTIACPIILATLGVALLFII. Residues 1614-2042 are Cytoplasmic-facing; that stretch reads RKKRKEKRLK…GAYSKSYTLV (429 aa). 4 disordered regions span residues 1716–1742, 1781–1805, 1841–1865, and 1940–2042; these read PLID…HSTR, SDSY…TESA, SSDQ…PSEP, and PPAR…YTLV. A compositionally biased stretch (basic residues) spans 1733-1742; sequence KSVKSAHSTR. Composition is skewed to polar residues over residues 1781–1790 and 1841–1863; these read SDSYSASLSQ and SSDQ…STPS. A compositionally biased stretch (pro residues) spans 1951–1960; sequence AKPPGLPPPS. Over residues 1961 to 1983 the composition is skewed to low complexity; it reads SSSSSTTLPQRTLPMPTAASTAP. Pro residues predominate over residues 1984–1995; it reads APAPAPAAPAEP. Low complexity-rich tracts occupy residues 1996–2005 and 2023–2034; these read PANTTTTTTT and GAGRAQKQGAGA.

Homodimer; mediates homophilic interactions to promote cell adhesion. SDK1, SDK2, DSCAM and DSCAML1 are expressed in non-overlapping subsets of interneurons and retinal ganglion cells (RGCs) that form synapses in distinct inner plexiform layer (IPL) sublaminae.

It is found in the cell membrane. The protein localises to the synapse. Its function is as follows. Cell adhesion molecule that plays a role in neuronal self-avoidance. Promotes repulsion between specific neuronal processes of either the same cell or the same subtype of cells. Adhesion molecule that promotes lamina-specific synaptic connections in the retina: expressed in specific subsets of interneurons and retinal ganglion cells (RGCs) and promotes synaptic connectivity via homophilic interactions. The chain is Cell adhesion molecule DSCAML1 (DSCAML1) from Gallus gallus (Chicken).